A 576-amino-acid polypeptide reads, in one-letter code: Sulfite reductase [NADPH] hemoprotein beta-component (576 aa).

The [4Fe-4S] cluster site is built by C435, C441, C480, and C484. C484 lines the siroheme pocket.

Belongs to the nitrite and sulfite reductase 4Fe-4S domain family. As to quaternary structure, alpha(8)-beta(8). The alpha component is a flavoprotein, the beta component is a hemoprotein. Siroheme is required as a cofactor. It depends on [4Fe-4S] cluster as a cofactor.

It catalyses the reaction hydrogen sulfide + 3 NADP(+) + 3 H2O = sulfite + 3 NADPH + 4 H(+). The protein operates within sulfur metabolism; hydrogen sulfide biosynthesis; hydrogen sulfide from sulfite (NADPH route): step 1/1. In terms of biological role, component of the sulfite reductase complex that catalyzes the 6-electron reduction of sulfite to sulfide. This is one of several activities required for the biosynthesis of L-cysteine from sulfate. This is Sulfite reductase [NADPH] hemoprotein beta-component from Proteus mirabilis (strain HI4320).